The following is a 234-amino-acid chain: LRP chaperone MESD (234 aa).

A signal peptide spans 1 to 33; the sequence is MAASRWARKAVVLLCASDLLLLLLLLPPPGSCA. The interval 1–164 is chaperone domain; that stretch reads MAASRWARKA…DRAIFMLRDG (164 aa). Disordered regions lie at residues 31-95 and 187-234; these read SCAA…DFSK and GQVY…REDL. Positions 54–70 are enriched in basic and acidic residues; the sequence is DIRDYNDADMARLLEQW. Positions 71–80 are enriched in acidic residues; the sequence is EKDDDIEEGD. Residues 165-204 form an escort domain region; the sequence is SYAWEIKDFLVGQDRCADVTLEGQVYPGKGGGSKEKNKTK. Residues 196-234 show a composition bias toward basic and acidic residues; it reads GSKEKNKTKQDKGKKKKEGDLKSRSSKEENRAGNKREDL. N-linked (GlcNAc...) asparagine glycosylation occurs at N201. The Prevents secretion from ER motif lies at 231-234; sequence REDL.

The protein belongs to the MESD family. As to quaternary structure, monomer. Interacts with LRP5; the interaction prevents LRP5 from forming aggregates and chaperones LRP6 to the plasma membrane. Interacts with LRP6; the interaction prevents LRP6 from forming aggregates and chaperones LRP6 to the plasma membrane. Interacts with LRP4; the interaction promotes glycosylation of LRP4 and its cell-surface expression.

The protein resides in the endoplasmic reticulum. In terms of biological role, chaperone specifically assisting the folding of beta-propeller/EGF modules within the family of low-density lipoprotein receptors (LDLRs). Acts as a modulator of the Wnt pathway through chaperoning the coreceptors of the canonical Wnt pathway, LRP5 and LRP6, to the plasma membrane. Essential for specification of embryonic polarity and mesoderm induction. Plays an essential role in neuromuscular junction (NMJ) formation by promoting cell-surface expression of LRP4. May regulate phagocytosis of apoptotic retinal pigment epithelium (RPE) cells. This is LRP chaperone MESD from Homo sapiens (Human).